Consider the following 461-residue polypeptide: tRNA-2-methylthio-N(6)-dimethylallyladenosine synthase (461 aa).

The 117-residue stretch at Lys18–Lys134 folds into the MTTase N-terminal domain. [4Fe-4S] cluster-binding residues include Cys27, Cys63, Cys97, Cys172, Cys176, and Cys179. The Radical SAM core domain maps to Cys158–Glu388. One can recognise a TRAM domain in the interval Lys391–Cys454.

This sequence belongs to the methylthiotransferase family. MiaB subfamily. Monomer. [4Fe-4S] cluster is required as a cofactor.

The protein resides in the cytoplasm. It catalyses the reaction N(6)-dimethylallyladenosine(37) in tRNA + (sulfur carrier)-SH + AH2 + 2 S-adenosyl-L-methionine = 2-methylsulfanyl-N(6)-dimethylallyladenosine(37) in tRNA + (sulfur carrier)-H + 5'-deoxyadenosine + L-methionine + A + S-adenosyl-L-homocysteine + 2 H(+). Catalyzes the methylthiolation of N6-(dimethylallyl)adenosine (i(6)A), leading to the formation of 2-methylthio-N6-(dimethylallyl)adenosine (ms(2)i(6)A) at position 37 in tRNAs that read codons beginning with uridine. This chain is tRNA-2-methylthio-N(6)-dimethylallyladenosine synthase, found in Syntrophus aciditrophicus (strain SB).